Reading from the N-terminus, the 107-residue chain is Integration host factor subunit beta (107 aa).

The segment covering 82-101 (PGKELRERVDRRAGEPLKAE) has biased composition (basic and acidic residues). The disordered stretch occupies residues 82–107 (PGKELRERVDRRAGEPLKAEDPDDDL).

The protein belongs to the bacterial histone-like protein family. Heterodimer of an alpha and a beta chain.

Its function is as follows. This protein is one of the two subunits of integration host factor, a specific DNA-binding protein that functions in genetic recombination as well as in transcriptional and translational control. In Paraburkholderia xenovorans (strain LB400), this protein is Integration host factor subunit beta.